We begin with the raw amino-acid sequence, 269 residues long: Exodeoxyribonuclease WalJ (269 aa).

Residues His-61, His-63, Asp-65, His-66, and Asp-150 each coordinate a divalent metal cation.

It belongs to the metallo-beta-lactamase superfamily. It depends on Fe(2+) as a cofactor. Zn(2+) serves as cofactor. Mn(2+) is required as a cofactor.

Its subcellular location is the cell membrane. 5'-&gt;3' double-stranded DNA exonuclease. May be involved in the WalK/WalR signal transduction pathway. Required for accurate coordination of cell division with DNA replication. May play a role in cell wall metabolism. In Streptococcus pneumoniae serotype 2 (strain D39 / NCTC 7466), this protein is Exodeoxyribonuclease WalJ.